A 125-amino-acid polypeptide reads, in one-letter code: uncharacterized protein (125 aa).

An N-terminal signal peptide occupies residues Met-1–Ala-21. Residues Lys-54–Ser-102 are a coiled coil. Positions Tyr-96 to Lys-125 are disordered. Positions Glu-108–Lys-125 are enriched in basic and acidic residues.

This is an uncharacterized protein from Rickettsia bellii (strain RML369-C).